Here is a 263-residue protein sequence, read N- to C-terminus: 3-deoxy-manno-octulosonate cytidylyltransferase (263 aa).

It belongs to the KdsB family.

The protein localises to the cytoplasm. It carries out the reaction 3-deoxy-alpha-D-manno-oct-2-ulosonate + CTP = CMP-3-deoxy-beta-D-manno-octulosonate + diphosphate. Its pathway is nucleotide-sugar biosynthesis; CMP-3-deoxy-D-manno-octulosonate biosynthesis; CMP-3-deoxy-D-manno-octulosonate from 3-deoxy-D-manno-octulosonate and CTP: step 1/1. It functions in the pathway bacterial outer membrane biogenesis; lipopolysaccharide biosynthesis. In terms of biological role, activates KDO (a required 8-carbon sugar) for incorporation into bacterial lipopolysaccharide in Gram-negative bacteria. This Burkholderia cenocepacia (strain HI2424) protein is 3-deoxy-manno-octulosonate cytidylyltransferase.